The chain runs to 190 residues: Large ribosomal subunit protein bL25 (190 aa).

Positions 1–20 (MSEQKTLSVQKRDNLGKGAN) are disordered.

The protein belongs to the bacterial ribosomal protein bL25 family. CTC subfamily. As to quaternary structure, part of the 50S ribosomal subunit; part of the 5S rRNA/L5/L18/L25 subcomplex. Contacts the 5S rRNA. Binds to the 5S rRNA independently of L5 and L18.

In terms of biological role, this is one of the proteins that binds to the 5S RNA in the ribosome where it forms part of the central protuberance. This Nitratidesulfovibrio vulgaris (strain ATCC 29579 / DSM 644 / CCUG 34227 / NCIMB 8303 / VKM B-1760 / Hildenborough) (Desulfovibrio vulgaris) protein is Large ribosomal subunit protein bL25.